Here is a 225-residue protein sequence, read N- to C-terminus: Cytidylate kinase (225 aa).

G11–T19 is a binding site for ATP.

The protein belongs to the cytidylate kinase family. Type 1 subfamily.

The protein resides in the cytoplasm. The enzyme catalyses CMP + ATP = CDP + ADP. It catalyses the reaction dCMP + ATP = dCDP + ADP. In Bacillus pumilus (strain SAFR-032), this protein is Cytidylate kinase.